Consider the following 426-residue polypeptide: Delta-aminolevulinic acid dehydratase, chloroplastic (426 aa).

The N-terminal 45 residues, 1–45 (MASTVSFSPANVQMLQGRSCHGHAAFGGCSAVPRTGPRMRSVAVR), are a transit peptide targeting the chloroplast. Residues 74 to 107 (GRFPAPPPLVRPKAPEGTPQIRPLDLTKRPRRNR) form a disordered region. The active-site Schiff-base intermediate with substrate is lysine 293. 2 residues coordinate 5-aminolevulinate: arginine 303 and lysine 315. Glutamate 331 contacts Mg(2+). Lysine 346 serves as the catalytic Schiff-base intermediate with substrate. Residues serine 372 and tyrosine 411 each coordinate 5-aminolevulinate.

Belongs to the ALAD family. In terms of assembly, homooctamer. Mg(2+) serves as cofactor.

Its subcellular location is the plastid. The protein localises to the chloroplast. The enzyme catalyses 2 5-aminolevulinate = porphobilinogen + 2 H2O + H(+). It functions in the pathway porphyrin-containing compound metabolism; protoporphyrin-IX biosynthesis; coproporphyrinogen-III from 5-aminolevulinate: step 1/4. In terms of biological role, catalyzes an early step in the biosynthesis of tetrapyrroles. Binds two molecules of 5-aminolevulinate per subunit, each at a distinct site, and catalyzes their condensation to form porphobilinogen. In Oryza sativa subsp. japonica (Rice), this protein is Delta-aminolevulinic acid dehydratase, chloroplastic (HEMB).